Consider the following 982-residue polypeptide: Serine/threonine-protein kinase PknD (982 aa).

The 292-residue stretch at 51 to 342 folds into the Protein kinase domain; it reads YQIIKSIGKG…ELIRDIENYL (292 aa). ATP is bound by residues 57 to 65 and Lys-80; that span reads IGKGGMGEV. Asp-186 serves as the catalytic Proton acceptor.

The protein belongs to the protein kinase superfamily. Ser/Thr protein kinase family. In terms of processing, autophosphorylated on serine and threonine residues.

It carries out the reaction L-seryl-[protein] + ATP = O-phospho-L-seryl-[protein] + ADP + H(+). The catalysed reaction is L-threonyl-[protein] + ATP = O-phospho-L-threonyl-[protein] + ADP + H(+). In terms of biological role, together with the serine/threonine kinase Pkn1, may play a role in the specific interactions with host proteins during intracellular growth. This Protochlamydia amoebophila (strain UWE25) protein is Serine/threonine-protein kinase PknD.